The sequence spans 132 residues: Small ribosomal subunit protein uS8 (132 aa).

The protein belongs to the universal ribosomal protein uS8 family. Part of the 30S ribosomal subunit. Contacts proteins S5 and S12.

In terms of biological role, one of the primary rRNA binding proteins, it binds directly to 16S rRNA central domain where it helps coordinate assembly of the platform of the 30S subunit. In Geobacter metallireducens (strain ATCC 53774 / DSM 7210 / GS-15), this protein is Small ribosomal subunit protein uS8.